A 165-amino-acid polypeptide reads, in one-letter code: Destrin (165 aa).

At alanine 2 the chain carries N-acetylalanine. Serine 3 bears the Phosphoserine mark. The ADF-H domain occupies 4–153 (GVQVADEVCR…NRACIAEKLG (150 aa)). At lysine 19 the chain carries N6-acetyllysine. The Nuclear localization signal motif lies at 30–34 (KKRKK).

Belongs to the actin-binding proteins ADF family. ISGylated.

Actin-depolymerizing protein. Severs actin filaments (F-actin) and binds to actin monomers (G-actin). Acts in a pH-independent manner. This is Destrin (DSTN) from Bos taurus (Bovine).